The chain runs to 839 residues: Glycerol-3-phosphate acyltransferase (839 aa).

The HXXXXD motif motif lies at 309 to 314 (CHRSHI).

This sequence belongs to the GPAT/DAPAT family.

The protein localises to the cell inner membrane. It catalyses the reaction sn-glycerol 3-phosphate + an acyl-CoA = a 1-acyl-sn-glycero-3-phosphate + CoA. Its pathway is phospholipid metabolism; CDP-diacylglycerol biosynthesis; CDP-diacylglycerol from sn-glycerol 3-phosphate: step 1/3. The polypeptide is Glycerol-3-phosphate acyltransferase (Pseudomonas fluorescens (strain SBW25)).